We begin with the raw amino-acid sequence, 218 residues long: Phosphoribosylformylglycinamidine synthase subunit PurQ (218 aa).

The Glutamine amidotransferase type-1 domain occupies 2 to 218; sequence TIGIVVFPGS…IKILQALLSN (217 aa). Cys-86 serves as the catalytic Nucleophile. Catalysis depends on residues His-194 and Glu-196.

In terms of assembly, part of the FGAM synthase complex composed of 1 PurL, 1 PurQ and 2 PurS subunits.

Its subcellular location is the cytoplasm. The enzyme catalyses N(2)-formyl-N(1)-(5-phospho-beta-D-ribosyl)glycinamide + L-glutamine + ATP + H2O = 2-formamido-N(1)-(5-O-phospho-beta-D-ribosyl)acetamidine + L-glutamate + ADP + phosphate + H(+). It carries out the reaction L-glutamine + H2O = L-glutamate + NH4(+). The protein operates within purine metabolism; IMP biosynthesis via de novo pathway; 5-amino-1-(5-phospho-D-ribosyl)imidazole from N(2)-formyl-N(1)-(5-phospho-D-ribosyl)glycinamide: step 1/2. In terms of biological role, part of the phosphoribosylformylglycinamidine synthase complex involved in the purines biosynthetic pathway. Catalyzes the ATP-dependent conversion of formylglycinamide ribonucleotide (FGAR) and glutamine to yield formylglycinamidine ribonucleotide (FGAM) and glutamate. The FGAM synthase complex is composed of three subunits. PurQ produces an ammonia molecule by converting glutamine to glutamate. PurL transfers the ammonia molecule to FGAR to form FGAM in an ATP-dependent manner. PurS interacts with PurQ and PurL and is thought to assist in the transfer of the ammonia molecule from PurQ to PurL. The polypeptide is Phosphoribosylformylglycinamidine synthase subunit PurQ (Prochlorococcus marinus (strain SARG / CCMP1375 / SS120)).